Consider the following 100-residue polypeptide: Apolipoprotein C-II (100 aa).

A signal peptide spans 1–22 (MGSRFLLALFLVLLVLGYEVQG). The lipid binding stretch occupies residues 66-74 (SVDEKLRDM). Positions 78-100 (SSAAVSTYAGIFTDQILTLLKGE) are lipoprotein lipase cofactor.

The protein belongs to the apolipoprotein C2 family. Proapolipoprotein C-II is synthesized as a sialic acid containing glycoprotein which is subsequently desialylated prior to its proteolytic processing. In terms of processing, proapolipoprotein C-II, the major form found in plasma undergoes proteolytic cleavage of its N-terminal hexapeptide to generate the mature form apolipoprotein C-II, which occurs as the minor form in plasma.

The protein resides in the secreted. Its function is as follows. Component of chylomicrons, very low-density lipoproteins (VLDL), low-density lipoproteins (LDL), and high-density lipoproteins (HDL) in plasma. Plays an important role in lipoprotein metabolism as an activator of lipoprotein lipase. This Neotoma lepida (Desert woodrat) protein is Apolipoprotein C-II (Apoc2).